The primary structure comprises 1436 residues: Pleiotropic drug resistance protein 1 (1436 aa).

In terms of domain architecture, ABC transporter 1 spans 165-438 (LDSIHILPSK…FESMGFKCPE (274 aa)). 198 to 205 (GPPGSGKT) contacts ATP. An ABC transmembrane type-2 1 domain is found at 516-729 (QLLKVCTERE…SVNAILVNEF (214 aa)). Transmembrane regions (helical) follow at residues 534–554 (FVYL…MTIF), 567–587 (GGIY…NGLS), 622–642 (IPVT…VMGF), 653–673 (FLLL…IAAV), 679–699 (VAST…GFIL), 707–727 (WWIW…ILVN), and 764–784 (IGVG…SVAL). The tract at residues 796-826 (TISDESENNESESSPQITSTQEGDSASENKK) is disordered. The segment covering 810–821 (PQITSTQEGDSA) has biased composition (polar residues). Residues 838–1090 (ITFDEVVYSV…HLIKYFESIP (253 aa)) form the ABC transporter 2 domain. 883-890 (GVSGAGKT) contributes to the ATP binding site. The region spanning 1163–1377 (TQCMACLWKQ…TLYGLVASQF (215 aa)) is the ABC transmembrane type-2 2 domain. Transmembrane regions (helical) follow at residues 1184 to 1204 (AVRL…FWDI), 1214 to 1234 (LVNA…QNSS), 1270 to 1290 (IPYI…MIGF), 1301 to 1321 (FFFM…TVAV), 1327 to 1347 (VASI…GFIV), 1358 to 1378 (WYYW…SQFG), and 1408 to 1428 (VVAA…ALGI).

This sequence belongs to the ABC transporter superfamily. ABCG family. PDR (TC 3.A.1.205) subfamily. Roots, petals and leaf epidermis, where it is confined to glandular trichomes (at protein level).

The protein resides in the cell membrane. In terms of biological role, excretes secondary metabolites such as terpenes. Involved in both constitutive and jasmonic acid-dependent induced defense. Confers some resistance to sclareol and B.cinerea. This is Pleiotropic drug resistance protein 1 (PDR1) from Nicotiana plumbaginifolia (Leadwort-leaved tobacco).